The following is a 653-amino-acid chain: DNA mismatch repair protein MutL (653 aa).

The interval 368–413 (EVSQVAEPEGKTDITNKKETETKEKAEKKENKQEEKEEKTSAPEYV) is disordered. Over residues 375 to 408 (PEGKTDITNKKETETKEKAEKKENKQEEKEEKTS) the composition is skewed to basic and acidic residues.

This sequence belongs to the DNA mismatch repair MutL/HexB family.

In terms of biological role, this protein is involved in the repair of mismatches in DNA. It is required for dam-dependent methyl-directed DNA mismatch repair. May act as a 'molecular matchmaker', a protein that promotes the formation of a stable complex between two or more DNA-binding proteins in an ATP-dependent manner without itself being part of a final effector complex. This Lactobacillus delbrueckii subsp. bulgaricus (strain ATCC 11842 / DSM 20081 / BCRC 10696 / JCM 1002 / NBRC 13953 / NCIMB 11778 / NCTC 12712 / WDCM 00102 / Lb 14) protein is DNA mismatch repair protein MutL.